We begin with the raw amino-acid sequence, 197 residues long: MSLSIDVTSLPSISSSIFKNESSSTTSTLSGKSIGRNEQYVSSDIEAFNKYMLSKSLEDIGPSDSASNDPLTSFSIRSNAVKTNADAGVSMDSSTQSRPSSNVGCDQMDFSLTKGINVSASLDSCVSISTNHKKEKSKKDKSRKHYPRIEADSDSEDYVLDDSDSDDGKCKNCKYKKKYFALRMRMKQVAMQLIEDL.

The residue at position 67 (S67) is a Phosphoserine; by host CK1. D92 contacts Mg(2+). Positions 130-167 are disordered; that stretch reads TNHKKEKSKKDKSRKHYPRIEADSDSEDYVLDDSDSDD. Basic residues predominate over residues 131–146; sequence NHKKEKSKKDKSRKHY. Over residues 152–165 the composition is skewed to acidic residues; that stretch reads DSDSEDYVLDDSDS. Phosphoserine; by host occurs at positions 153, 155, 163, and 165.

Belongs to the rotavirus NSP5 family. As to quaternary structure, homodimer. Interacts with VP1. Interacts with VP2. Interacts with NSP2; this interaction leads to up-regulation of NSP5 hyperphosphorylation and formation of virus factories. Interacts with NSP6. Participates in the selective exclusion of host proteins from stress granules (SG) and P bodies (PB). Also participates in the sequestration of these remodeled organelles in viral factories. It depends on Mg(2+) as a cofactor. In terms of processing, O-glycosylated. Hyperphosphorylated on serine residues, when in dimeric form. Phosphorylation by host CK1 is required for the hyperphosphorylation of NSP5 dimer.

Its subcellular location is the host cytoplasm. Functionally, plays an essential role in the viral genome replication. Participates, together with NSP2, in the formation of viral factories (viroplasms), which are large inclusions in the host cytoplasm where replication intermediates are assembled and viral RNA replication takes place. Orchestrates the recruitment of viroplasmic proteins such as capsid proteins to these factories. Participates in the selective exclusion of host proteins from stress granules (SG) and P bodies (PB). Also participates in the sequestration of these remodeled organelles in viral factories. This Homo sapiens (Human) protein is Non-structural protein 5.